The following is a 117-amino-acid chain: Immunoglobulin kappa variable 1-39 (117 aa).

The signal sequence occupies residues 1–22 (MDMRVPAQLLGLLLLWLRGARC). Positions 23 to 45 (DIQMTQSPSSLSASVGDRVTITC) are framework-1. The region spanning 24–117 (IQMTQSPSSL…YYCQQSYSTP (94 aa)) is the Ig-like domain. A disulfide bond links cysteine 45 and cysteine 110. The tract at residues 46–56 (RASQSISSYLN) is complementarity-determining-1. The interval 57–71 (WYQQKPGKAPKLLIY) is framework-2. The segment at 72–78 (AASSLQS) is complementarity-determining-2. The interval 79 to 110 (GVPSRFSGSGSGTDFTLTISSLQPEDFATYYC) is framework-3. The segment at 111–117 (QQSYSTP) is complementarity-determining-3.

As to quaternary structure, immunoglobulins are composed of two identical heavy chains and two identical light chains; disulfide-linked.

The protein resides in the secreted. It is found in the cell membrane. V region of the variable domain of immunoglobulin light chains that participates in the antigen recognition. Immunoglobulins, also known as antibodies, are membrane-bound or secreted glycoproteins produced by B lymphocytes. In the recognition phase of humoral immunity, the membrane-bound immunoglobulins serve as receptors which, upon binding of a specific antigen, trigger the clonal expansion and differentiation of B lymphocytes into immunoglobulins-secreting plasma cells. Secreted immunoglobulins mediate the effector phase of humoral immunity, which results in the elimination of bound antigens. The antigen binding site is formed by the variable domain of one heavy chain, together with that of its associated light chain. Thus, each immunoglobulin has two antigen binding sites with remarkable affinity for a particular antigen. The variable domains are assembled by a process called V-(D)-J rearrangement and can then be subjected to somatic hypermutations which, after exposure to antigen and selection, allow affinity maturation for a particular antigen. This Homo sapiens (Human) protein is Immunoglobulin kappa variable 1-39.